Reading from the N-terminus, the 180-residue chain is Baseplate protein gp48 (180 aa).

In terms of assembly, part of a complex composed of three DNA circularization protein N, three baseplate hub protein gp44 and three sub-complex wedge (made of two copies of each baseplate protein gp46, gp47 and gp48) that forms the baseplate.

It localises to the virion. It is found in the host cytoplasm. Component of the baseplate. In Enterobacteriaceae (Bacteriophage Mu), this protein is Baseplate protein gp48.